The primary structure comprises 176 residues: Adenylyl-sulfate kinase (176 aa).

Position 12-19 (12-19) interacts with ATP; that stretch reads GLSGAGKT. Ser-86 serves as the catalytic Phosphoserine intermediate.

The protein belongs to the APS kinase family.

It carries out the reaction adenosine 5'-phosphosulfate + ATP = 3'-phosphoadenylyl sulfate + ADP + H(+). The protein operates within sulfur metabolism; hydrogen sulfide biosynthesis; sulfite from sulfate: step 2/3. Functionally, catalyzes the synthesis of activated sulfate. In Synechococcus sp. (strain JA-3-3Ab) (Cyanobacteria bacterium Yellowstone A-Prime), this protein is Adenylyl-sulfate kinase.